The chain runs to 511 residues: ATP synthase subunit alpha (511 aa).

169 to 176 (GDRQTGKT) contributes to the ATP binding site.

The protein belongs to the ATPase alpha/beta chains family. In terms of assembly, F-type ATPases have 2 components, CF(1) - the catalytic core - and CF(0) - the membrane proton channel. CF(1) has five subunits: alpha(3), beta(3), gamma(1), delta(1), epsilon(1). CF(0) has three main subunits: a(1), b(2) and c(9-12). The alpha and beta chains form an alternating ring which encloses part of the gamma chain. CF(1) is attached to CF(0) by a central stalk formed by the gamma and epsilon chains, while a peripheral stalk is formed by the delta and b chains.

The protein localises to the cell inner membrane. The catalysed reaction is ATP + H2O + 4 H(+)(in) = ADP + phosphate + 5 H(+)(out). Its function is as follows. Produces ATP from ADP in the presence of a proton gradient across the membrane. The alpha chain is a regulatory subunit. In Bartonella bacilliformis (strain ATCC 35685 / KC583 / Herrer 020/F12,63), this protein is ATP synthase subunit alpha.